Here is a 949-residue protein sequence, read N- to C-terminus: Translation initiation factor IF-2 (949 aa).

3 disordered regions span residues L46–A82, E145–S176, and I188–L361. Low complexity predominate over residues A152–V162. The span at P163 to P172 shows a compositional bias: pro residues. Residues P263 to P276 show a composition bias toward low complexity. Over residues S334–H344 the composition is skewed to basic and acidic residues. A tr-type G domain is found at E449–K618. Positions G458 to T465 are G1. A GTP-binding site is contributed by G458 to T465. Residues G483–H487 are G2. The G3 stretch occupies residues D504 to G507. GTP contacts are provided by residues D504–H508 and N558–D561. Positions N558 to D561 are G4. Residues S594–K596 form a G5 region.

It belongs to the TRAFAC class translation factor GTPase superfamily. Classic translation factor GTPase family. IF-2 subfamily.

The protein localises to the cytoplasm. Its function is as follows. One of the essential components for the initiation of protein synthesis. Protects formylmethionyl-tRNA from spontaneous hydrolysis and promotes its binding to the 30S ribosomal subunits. Also involved in the hydrolysis of GTP during the formation of the 70S ribosomal complex. The sequence is that of Translation initiation factor IF-2 from Trichlorobacter lovleyi (strain ATCC BAA-1151 / DSM 17278 / SZ) (Geobacter lovleyi).